We begin with the raw amino-acid sequence, 185 residues long: Ribosome-recycling factor (185 aa).

This sequence belongs to the RRF family.

It is found in the cytoplasm. Functionally, responsible for the release of ribosomes from messenger RNA at the termination of protein biosynthesis. May increase the efficiency of translation by recycling ribosomes from one round of translation to another. The sequence is that of Ribosome-recycling factor from Symbiobacterium thermophilum (strain DSM 24528 / JCM 14929 / IAM 14863 / T).